The following is a 634-amino-acid chain: Probable potassium transport system protein Kup (634 aa).

A run of 12 helical transmembrane segments spans residues 21-41, 58-78, 110-130, 148-168, 180-200, 217-237, 258-278, 296-316, 348-368, 377-397, 408-428, and 432-452; these read IILS…LYTL, VLGI…IKYV, IYIV…DGII, PHMK…LFLC, FGPI…YNII, FFLE…LAVT, WMYV…ALVL, GLYP…QALI, IYVP…VIGF, AYGV…IIYA, LLMI…ANII, and DGAW…RTWL.

This sequence belongs to the HAK/KUP transporter (TC 2.A.72) family.

The protein resides in the cell inner membrane. It catalyses the reaction K(+)(in) + H(+)(in) = K(+)(out) + H(+)(out). Its function is as follows. Transport of potassium into the cell. Likely operates as a K(+):H(+) symporter. The protein is Probable potassium transport system protein Kup of Xylella fastidiosa (strain Temecula1 / ATCC 700964).